Here is a 314-residue protein sequence, read N- to C-terminus: Calcium homeostasis modulator protein 4 (314 aa).

Residues 1–14 (MCPTLNNIVSSLQR) lie on the Cytoplasmic side of the membrane. A helical transmembrane segment spans residues 15–37 (NGIFINSLIAALTIGGQQLFSSS). The Extracellular segment spans residues 38 to 48 (TFSCPCQVGKN). 2 cysteine pairs are disulfide-bonded: C41–C131 and C43–C162. A helical membrane pass occupies residues 49–71 (FYYGSAFLVIPALILLVAGFALR). At 72-103 (SQMWTITGEYCCSCAPPYRRISPLECKLACLR) the chain is on the cytoplasmic side. The helical transmembrane segment at 104 to 129 (FFSITGRAVIAPLTWLAVTLLTGTYY) threads the bilayer. Topologically, residues 130-183 (ECAASEFASVDHYPMFDNVSASKREEILAGFPCCRSAPSDVILVRDEIALLHRY) are extracellular. The chain crosses the membrane as a helical span at residues 184–207 (QSQMLGWILITLATIAALVSCCVA). At 208-314 (KCCSPLTSLQ…DRSRGIELKP (107 aa)) the chain is on the cytoplasmic side.

Belongs to the CALHM family. As to quaternary structure, oligomerizes to form decameric and undecameric channels. Two hemichannels can assemble in a tail-to-tail manner to form a gap junction. As to expression, placenta.

The protein resides in the cell membrane. Functionally, may assemble to form gap junction channel-like structures involved in intercellular communication. Channel gating and ion conductance are likely regulated by membrane lipids rather than by membrane depolarization or extracellular calcium levels. This chain is Calcium homeostasis modulator protein 4, found in Homo sapiens (Human).